A 269-amino-acid polypeptide reads, in one-letter code: Sulfur carrier protein FdhD (269 aa).

Cysteine 111 serves as the catalytic Cysteine persulfide intermediate.

The protein belongs to the FdhD family.

The protein resides in the cytoplasm. Functionally, required for formate dehydrogenase (FDH) activity. Acts as a sulfur carrier protein that transfers sulfur from IscS to the molybdenum cofactor prior to its insertion into FDH. This is Sulfur carrier protein FdhD from Brucella melitensis biotype 1 (strain ATCC 23456 / CCUG 17765 / NCTC 10094 / 16M).